The chain runs to 281 residues: NADPH-dependent 7-cyano-7-deazaguanine reductase (281 aa).

81–83 contacts substrate; sequence VES. Residue 83–84 participates in NADPH binding; it reads SK. Residue C188 is the Thioimide intermediate of the active site. Residue D195 is the Proton donor of the active site. Substrate is bound at residue 227-228; it reads HE. Residue 256–257 participates in NADPH binding; the sequence is RG.

It belongs to the GTP cyclohydrolase I family. QueF type 2 subfamily. Homodimer.

The protein localises to the cytoplasm. The catalysed reaction is 7-aminomethyl-7-carbaguanine + 2 NADP(+) = 7-cyano-7-deazaguanine + 2 NADPH + 3 H(+). It functions in the pathway tRNA modification; tRNA-queuosine biosynthesis. Its function is as follows. Catalyzes the NADPH-dependent reduction of 7-cyano-7-deazaguanine (preQ0) to 7-aminomethyl-7-deazaguanine (preQ1). In Acidovorax ebreus (strain TPSY) (Diaphorobacter sp. (strain TPSY)), this protein is NADPH-dependent 7-cyano-7-deazaguanine reductase.